Here is a 138-residue protein sequence, read N- to C-terminus: Succinate dehydrogenase assembly factor 4, mitochondrial (138 aa).

Residues 1 to 32 (MLCAIKSTGYRYPRTGALNLLRGRPFNMATRK) constitute a mitochondrion transit peptide. Polar residues predominate over residues 71–98 (QATGDRTKESLNSPLLTKNDIGSFSPEF). Positions 71–138 (QATGDRTKES…YSFNGRVTDF (68 aa)) are disordered.

It belongs to the SDHAF4 family. As to quaternary structure, interacts with SDH1 in its FAD-bound form.

It is found in the mitochondrion matrix. Functionally, plays an essential role in the assembly of succinate dehydrogenase (SDH), an enzyme complex (also referred to as respiratory complex II) that is a component of both the tricarboxylic acid (TCA) cycle and the mitochondrial electron transport chain, and which couples the oxidation of succinate to fumarate with the reduction of ubiquinone (coenzyme Q) to ubiquinol. Binds to the flavoprotein subunit SDH1 in its FAD-bound form, blocking the generation of excess reactive oxygen species (ROS) and facilitating its assembly with the iron-sulfur protein subunit SDH2 into the SDH catalytic dimer. This chain is Succinate dehydrogenase assembly factor 4, mitochondrial, found in Saccharomyces cerevisiae (strain ATCC 204508 / S288c) (Baker's yeast).